Reading from the N-terminus, the 158-residue chain is Ethylene-responsive transcription factor ERF120 (158 aa).

The segment at residues 86–147 (KHKGVRKKPS…SARRGTKNGE (62 aa)) is a DNA-binding region (AP2/ERF). Residues 134 to 158 (VGRRSARRGTKNGEEASTKKTTEKN) form a disordered region. Positions 144–158 (KNGEEASTKKTTEKN) are enriched in basic and acidic residues.

The protein belongs to the AP2/ERF transcription factor family. ERF subfamily.

Its subcellular location is the nucleus. Probably acts as a transcriptional activator. Binds to the GCC-box pathogenesis-related promoter element. May be involved in the regulation of gene expression by stress factors and by components of stress signal transduction pathways. This chain is Ethylene-responsive transcription factor ERF120 (ERF120), found in Arabidopsis thaliana (Mouse-ear cress).